We begin with the raw amino-acid sequence, 123 residues long: Large ribosomal subunit protein bL12 (123 aa).

This sequence belongs to the bacterial ribosomal protein bL12 family. Homodimer. Part of the ribosomal stalk of the 50S ribosomal subunit. Forms a multimeric L10(L12)X complex, where L10 forms an elongated spine to which 2 to 4 L12 dimers bind in a sequential fashion. Binds GTP-bound translation factors.

Forms part of the ribosomal stalk which helps the ribosome interact with GTP-bound translation factors. Is thus essential for accurate translation. The protein is Large ribosomal subunit protein bL12 of Acinetobacter baumannii (strain AB307-0294).